The following is a 471-amino-acid chain: Coronin-6 (471 aa).

WD repeat units lie at residues 79 to 119 (GHTG…PVRN), 129 to 169 (GHSK…VLLS), 173 to 212 (IHPD…VVAE), 216 to 259 (PHEG…EPVA), and 264 to 304 (DTSN…PFVH). Residues 410–433 (ILDVRPPASPRRSQSASEAPLSQH) form a disordered region. Over residues 419 to 429 (PRRSQSASEAP) the composition is skewed to low complexity. The stretch at 426–468 (SEAPLSQHTLETLLEEIKALRDRVQAQEERITALENMLCELVD) forms a coiled coil.

The polypeptide is Coronin-6 (Coro6) (Mus musculus (Mouse)).